The primary structure comprises 481 residues: Glutamyl-tRNA(Gln) amidotransferase subunit A (481 aa).

Catalysis depends on charge relay system residues lysine 76 and serine 151. Residue serine 175 is the Acyl-ester intermediate of the active site.

The protein belongs to the amidase family. GatA subfamily. As to quaternary structure, heterotrimer of A, B and C subunits.

It carries out the reaction L-glutamyl-tRNA(Gln) + L-glutamine + ATP + H2O = L-glutaminyl-tRNA(Gln) + L-glutamate + ADP + phosphate + H(+). Allows the formation of correctly charged Gln-tRNA(Gln) through the transamidation of misacylated Glu-tRNA(Gln) in organisms which lack glutaminyl-tRNA synthetase. The reaction takes place in the presence of glutamine and ATP through an activated gamma-phospho-Glu-tRNA(Gln). In Neisseria meningitidis serogroup A / serotype 4A (strain DSM 15465 / Z2491), this protein is Glutamyl-tRNA(Gln) amidotransferase subunit A.